The following is a 62-amino-acid chain: Sec-independent protein translocase protein TatA (62 aa).

Residues 10–32 form a helical membrane-spanning segment; it reads LLIILIIVIAIFGAGKLAGLGGA.

The protein belongs to the TatA/E family. In terms of assembly, forms a complex with TatC.

It is found in the cell membrane. Functionally, part of the twin-arginine translocation (Tat) system that transports large folded proteins containing a characteristic twin-arginine motif in their signal peptide across membranes. TatA could form the protein-conducting channel of the Tat system. The polypeptide is Sec-independent protein translocase protein TatA (Chloroflexus aurantiacus (strain ATCC 29366 / DSM 635 / J-10-fl)).